A 41-amino-acid polypeptide reads, in one-letter code: MKIRNSLKSLKGRHRDNRVIRRRGRTYIINKTVRRFKARQG.

Belongs to the bacterial ribosomal protein bL36 family.

The chain is Large ribosomal subunit protein bL36 from Zymomonas mobilis subsp. mobilis (strain ATCC 31821 / ZM4 / CP4).